Here is a 337-residue protein sequence, read N- to C-terminus: Porphobilinogen deaminase (337 aa).

Position 254 is an S-(dipyrrolylmethanemethyl)cysteine (C254).

This sequence belongs to the HMBS family. Requires dipyrromethane as cofactor.

It catalyses the reaction 4 porphobilinogen + H2O = hydroxymethylbilane + 4 NH4(+). The protein operates within porphyrin-containing compound metabolism; protoporphyrin-IX biosynthesis; coproporphyrinogen-III from 5-aminolevulinate: step 2/4. Tetrapolymerization of the monopyrrole PBG into the hydroxymethylbilane pre-uroporphyrinogen in several discrete steps. The protein is Porphobilinogen deaminase (pda-1) of Neurospora crassa (strain ATCC 24698 / 74-OR23-1A / CBS 708.71 / DSM 1257 / FGSC 987).